A 309-amino-acid polypeptide reads, in one-letter code: Taste receptor type 2 member 124 (309 aa).

Over 1–7 (MVSVLHS) the chain is Extracellular. A helical membrane pass occupies residues 8 to 28 (ISTIIIIAEFVWGNLSNGLIV). Topologically, residues 29-46 (LKNCLDWINIKELSTLDQ) are cytoplasmic. A helical transmembrane segment spans residues 47-67 (ILILLAISRISLIWETLLMWV). Residues 68–81 (KDKLISSITIEELK) lie on the Extracellular side of the membrane. A helical membrane pass occupies residues 82–102 (MIMFSFMLSSHFSLWLATALS). Residues 103–127 (TFYLFRIANCSWQIFLYLKWRLKHL) lie on the Cytoplasmic side of the membrane. A helical membrane pass occupies residues 128 to 148 (IVQMLLGSVMFLIANIIQITI). The Extracellular portion of the chain corresponds to 149–182 (TLEKRFYQYKGNTSVNSIQNEFALLIEMMLFNMT). N-linked (GlcNAc...) asparagine glycans are attached at residues Asn160 and Asn180. A helical transmembrane segment spans residues 183–203 (IFSVIPFLLALISFFLLIFSL). Residues 204-227 (WKHLQRMQLNSREDRDPSTKAHRN) lie on the Cytoplasmic side of the membrane. Residues 228–248 (ALGIMVSFLLLYTMYVLSLLI) form a helical membrane-spanning segment. Residues 249–261 (SWIAQKNQSELVH) are Extracellular-facing. N-linked (GlcNAc...) asparagine glycosylation occurs at Asn255. Residues 262–282 (IICMITSLLNPSVHSSILILG) traverse the membrane as a helical segment. Residues 283 to 309 (NFKLKQSSLCILRHLGCRLKSQNTPTT) lie on the Cytoplasmic side of the membrane.

This sequence belongs to the G-protein coupled receptor T2R family.

Its subcellular location is the membrane. Its function is as follows. Putative taste receptor which may play a role in the perception of bitterness. This chain is Taste receptor type 2 member 124, found in Rattus norvegicus (Rat).